The sequence spans 323 residues: Prostaglandin-E(2) 9-reductase (323 aa).

NADP(+) is bound by residues 23-24 (TY) and Asp-50. Tyr-24 contributes to the substrate binding site. The Proton donor role is filled by Tyr-55. His-117 is a binding site for substrate. NADP(+) is bound by residues 166 to 167 (SN), Gln-190, 216 to 221 (YSALGS), and 270 to 280 (KSFTEKRIKEN).

This sequence belongs to the aldo/keto reductase family.

It is found in the cytoplasm. It carries out the reaction prostaglandin F2alpha + NADP(+) = prostaglandin E2 + NADPH + H(+). It catalyses the reaction (17R,20S)-17,20-dihydroxypregn-4-en-3-one + NADP(+) = 17alpha-hydroxyprogesterone + NADPH + H(+). The catalysed reaction is (17R,20S)-17,20-dihydroxypregn-4-en-3-one + NAD(+) = 17alpha-hydroxyprogesterone + NADH + H(+). Its function is as follows. Can convert prostaglandin E2 to prostaglandin F2-alpha. This is Prostaglandin-E(2) 9-reductase (AKR1C5) from Oryctolagus cuniculus (Rabbit).